A 232-amino-acid polypeptide reads, in one-letter code: Urease accessory protein UreF (232 aa).

It belongs to the UreF family. In terms of assembly, ureD, UreF and UreG form a complex that acts as a GTP-hydrolysis-dependent molecular chaperone, activating the urease apoprotein by helping to assemble the nickel containing metallocenter of UreC. The UreE protein probably delivers the nickel.

Its subcellular location is the cytoplasm. In terms of biological role, required for maturation of urease via the functional incorporation of the urease nickel metallocenter. This Trichodesmium erythraeum (strain IMS101) protein is Urease accessory protein UreF.